Here is a 504-residue protein sequence, read N- to C-terminus: Sodium/proline symporter (504 aa).

A run of 13 helical transmembrane segments spans residues 8–28 (LITFTIYIFGMLLIGVLAYYY), 50–70 (SAGASDMSGWLLMGLPGAVYL), 73–93 (LVEGWIAIGLTIGAYFNWLLV), 127–147 (LVSATIILVFLTIYCASGVVA), 163–183 (ALWYGAAATIAYTFIGGFLAV), 189–209 (IQATLMIFALILTPVFVLLSF), 240–260 (LGLLSLAAWGLGYFGQPHILA), 281–301 (WMVLCLAGAIGIGLFAIPYFF), 324–344 (LLFNPWIAGILLSAILAAVMS), 374–394 (ELVWLGRIMVLVIAALAIWIA), 405–425 (VEFAWAGFGSAFGPVVLFSLF), 434–454 (AMAGMLVGAVTVFAWKEVVPA), and 461–481 (VYEMIPGFAFASLAIIVISLL).

It belongs to the sodium:solute symporter (SSF) (TC 2.A.21) family.

Its subcellular location is the cell inner membrane. The enzyme catalyses L-proline(in) + Na(+)(in) = L-proline(out) + Na(+)(out). Functionally, catalyzes the sodium-dependent uptake of extracellular L-proline. In Haemophilus influenzae (strain ATCC 51907 / DSM 11121 / KW20 / Rd), this protein is Sodium/proline symporter (putP).